The following is a 688-amino-acid chain: Lap-Emerin-Man domain protein 2 (688 aa).

Disordered stretches follow at residues 62–113 (LQKE…IDKP) and 202–227 (PQLR…HKRP). Positions 82–92 (PKYLYPSSPSK) are enriched in low complexity. Positions 212–222 (RLQTSATSSPL) are enriched in polar residues. 2 helical membrane-spanning segments follow: residues 318 to 338 (YLVH…LALL) and 547 to 567 (KVFL…INFF). Thr-683 bears the Phosphothreonine mark. The residue at position 684 (Ser-684) is a Phosphoserine.

The protein resides in the nucleus inner membrane. In terms of biological role, nucleus inner membrane protein involved in meiosis. Plays a role in regulating nuclear envelope (NE) morphology and nuclear integrity, particularly during spindle pole body (SPB) extrusion or insertion through the NE, and perhaps during karyokinesis. The polypeptide is Lap-Emerin-Man domain protein 2 (lem2) (Schizosaccharomyces pombe (strain 972 / ATCC 24843) (Fission yeast)).